The primary structure comprises 526 residues: MERLPLSPAVLFLIIVLPILYLWIRYTAPARPHGKHLSLPPGPPRLPKIGNLHQVPRQIPWKKYKEWSDTYGPIMSVQLADTIAVVFSSWDLIKNHIERRNTIYSSRPSVPFFLHATGGLNASILPYGPEWKLQRAIRSSVLKPSMTVKYRDVQHVETTQLLHELLSTNDFPVCLRRCIASVFLTVAYGERCVDHAGLEAIDRLEELNRAIALHAEALFSGAAGILTQLVLPKALVDRLPVRWKKDADMLHNRLTADLVARTRAALVRPGWNWVKEFSMKDGIGSGDGDGEQGSKVELKRLAYMVGSLYEASMAASQALRVIILAGLLHPDATRRMHDELDAVVGTGRLPDFHDAAQLPYTQAFIKEAMRWRSLTPMGSPRATSDEDECRGYHIPCGATVLVNVWAINHDEAIFLDPFAFQPERWIENPDLPQLMYGMGQRACPGRHMGQDSLFLATARLFWAFDMALPDGADPIDQERFLDSGTTLAAFLPDFEVRFTPRSEKYQEVIENSMAVLPDVLSISATP.

A helical transmembrane segment spans residues 4–24 (LPLSPAVLFLIIVLPILYLWI). Residue cysteine 443 participates in heme binding.

The protein belongs to the cytochrome P450 family. The cofactor is heme.

The protein resides in the membrane. It carries out the reaction tryprostatin A + reduced [NADPH--hemoprotein reductase] + O2 = fumitremorgin C + oxidized [NADPH--hemoprotein reductase] + 2 H2O + H(+). The protein operates within mycotoxin biosynthesis. In terms of biological role, cytochrome P450 monooxygenase; part of the gene cluster that mediates the biosynthesis of fumitremorgins, indole alkaloids that carry not only intriguing chemical structures, but also interesting biological and pharmacological activities. The biosynthesis of fumitremorgin-type alkaloids begins by condensation of the two amino acids L-tryptophan and L-proline to brevianamide F, catalyzed by the non-ribosomal peptide synthetase ftmA. Brevianamide F is then prenylated by the prenyltransferase ftmPT1/ftmB in the presence of dimethylallyl diphosphate, resulting in the formation of tryprostatin B. The three cytochrome P450 monooxygenases, ftmP450-1/ftmC, ftmP450-2/ftmE and ftmP450-3/FtmG, are responsible for the conversion of tryprostatin B to 6-hydroxytryprostatin B, tryprostatin A to fumitremorgin C and fumitremorgin C to 12,13-dihydroxyfumitremorgin C, respectively. The putative methyltransferase ftmMT/ftmD is expected for the conversion of 6-hydroxytryprostatin B to tryprostatin A. FtmPT2/FtmH catalyzes the prenylation of 12,13-dihydroxyfumitre-morgin C in the presence of dimethylallyl diphosphate, resulting in the formation of fumitremorgin B. Fumitremorgin B is further converted to verruculogen by ftmOx1/ftmF via the insertion of an endoperoxide bond between the two prenyl moieties. In some fungal species, verruculogen is further converted to fumitremorgin A, but the enzymes involved in this step have not been identified yet. The protein is Fumitremorgin C synthase of Aspergillus fumigatus (Neosartorya fumigata).